Here is a 49-residue protein sequence, read N- to C-terminus: Defensin Tk-AMP-D1 (49 aa).

4 disulfides stabilise this stretch: C3/C49, C14/C34, C20/C43, and C24/C45.

Has weak antifungal activity against F.graminearum and F.verticillioides below 30 ug/ml, but not against A.consortiale B.cinerea, H.sativum, F.culmorum, C.graminicola and D.maydis. This is Defensin Tk-AMP-D1 from Triticum kiharae (Wheat).